We begin with the raw amino-acid sequence, 122 residues long: Large ribosomal subunit protein uL14 (122 aa).

This sequence belongs to the universal ribosomal protein uL14 family. Part of the 50S ribosomal subunit. Forms a cluster with proteins L3 and L19. In the 70S ribosome, L14 and L19 interact and together make contacts with the 16S rRNA in bridges B5 and B8.

Binds to 23S rRNA. Forms part of two intersubunit bridges in the 70S ribosome. This Methylobacillus flagellatus (strain ATCC 51484 / DSM 6875 / VKM B-1610 / KT) protein is Large ribosomal subunit protein uL14.